The chain runs to 419 residues: Probable pectate lyase C (419 aa).

Positions 1–19 (MRLTPSLISCLSLLHFTSA) are cleaved as a signal peptide. N-linked (GlcNAc...) asparagine glycosylation is found at N48, N164, and N201. R204 is an active-site residue. The 36-residue stretch at 261–296 (NENFHAYVETNYYDSDKDGTLNGSELGVDSTNYGGM) folds into the EF-hand domain. 4 residues coordinate Ca(2+): D274, D276, D278, and T280. N282 carries an N-linked (GlcNAc...) asparagine glycan. E285 is a binding site for Ca(2+). The tract at residues 352–395 (ISDEADMGGAGDLDQGTTPTDTDGDGIPDDAEAELGTDPNTADS) is disordered. Residues 363 to 372 (DLDQGTTPTD) show a composition bias toward low complexity. A compositionally biased stretch (acidic residues) spans 373–386 (TDGDGIPDDAEAEL).

It belongs to the polysaccharide lyase 1 family. Requires Ca(2+) as cofactor.

The protein localises to the secreted. It catalyses the reaction Eliminative cleavage of (1-&gt;4)-alpha-D-galacturonan to give oligosaccharides with 4-deoxy-alpha-D-galact-4-enuronosyl groups at their non-reducing ends.. Its function is as follows. Pectinolytic enzyme consist of four classes of enzymes: pectin lyase, polygalacturonase, pectin methylesterase and rhamnogalacturonase. Among pectinolytic enzymes, pectin lyase is the most important in depolymerization of pectin, since it cleaves internal glycosidic bonds of highly methylated pectins. Favors pectate, the anion, over pectin, the methyl ester. This Aspergillus oryzae (strain ATCC 42149 / RIB 40) (Yellow koji mold) protein is Probable pectate lyase C (plyC).